The primary structure comprises 293 residues: ATP synthase gamma chain (293 aa).

It belongs to the ATPase gamma chain family. As to quaternary structure, F-type ATPases have 2 components, CF(1) - the catalytic core - and CF(0) - the membrane proton channel. CF(1) has five subunits: alpha(3), beta(3), gamma(1), delta(1), epsilon(1). CF(0) has three main subunits: a, b and c.

It localises to the cell inner membrane. Produces ATP from ADP in the presence of a proton gradient across the membrane. The gamma chain is believed to be important in regulating ATPase activity and the flow of protons through the CF(0) complex. The sequence is that of ATP synthase gamma chain from Psychrobacter arcticus (strain DSM 17307 / VKM B-2377 / 273-4).